Here is a 298-residue protein sequence, read N- to C-terminus: Glutamyl-Q tRNA(Asp) synthetase (298 aa).

L-glutamate is bound by residues 9 to 13 (RFAPS) and glutamate 45. The 'HIGH' region signature appears at 12–22 (PSPSGELHFGS). Zn(2+)-binding residues include cysteine 101, cysteine 103, tyrosine 115, and cysteine 119. L-glutamate-binding residues include tyrosine 172 and arginine 190. The 'KMSKS' region motif lies at 228-232 (KLSKQ). Residue lysine 231 participates in ATP binding.

It belongs to the class-I aminoacyl-tRNA synthetase family. GluQ subfamily. Requires Zn(2+) as cofactor.

Functionally, catalyzes the tRNA-independent activation of glutamate in presence of ATP and the subsequent transfer of glutamate onto a tRNA(Asp). Glutamate is transferred on the 2-amino-5-(4,5-dihydroxy-2-cyclopenten-1-yl) moiety of the queuosine in the wobble position of the QUC anticodon. This is Glutamyl-Q tRNA(Asp) synthetase from Salmonella typhi.